Reading from the N-terminus, the 264-residue chain is Tropomyosin Cha f 1.0101 (264 aa).

Met1 is modified (N-acetylmethionine). Disordered stretches follow at residues 1 to 56 (MDAI…VENE) and 92 to 126 (IQLP…SERM). Residues 1–264 (MDAIKKKMQA…RLEDELVNEK (264 aa)) are a coiled coil. Over residues 12–45 (KLEKDNAMDRADTLEQQNKEANLRAEKTEEEIRA) the composition is skewed to basic and acidic residues.

This sequence belongs to the tropomyosin family. As to quaternary structure, homodimer. In terms of tissue distribution, expressed in muscle (at protein level). Expressed in claw muscles.

Tropomyosin, in association with the troponin complex, plays a central role in the calcium dependent regulation of muscle contraction. This Charybdis feriata (Crucifix crab) protein is Tropomyosin Cha f 1.0101.